A 619-amino-acid polypeptide reads, in one-letter code: Chaperone protein DnaK (619 aa).

Residue T175 is modified to Phosphothreonine; by autocatalysis. A disordered region spans residues 578–619; the sequence is NGGAQGEGFDPNNMGGANAGTGAANSNDDNVVDADFEVQDDK. Positions 589-606 are enriched in low complexity; sequence NNMGGANAGTGAANSNDD. Residues 607–619 are compositionally biased toward acidic residues; the sequence is NVVDADFEVQDDK.

This sequence belongs to the heat shock protein 70 family.

Its function is as follows. Acts as a chaperone. In Clostridium perfringens (strain SM101 / Type A), this protein is Chaperone protein DnaK.